A 272-amino-acid polypeptide reads, in one-letter code: 3-methyl-2-oxobutanoate hydroxymethyltransferase (272 aa).

Aspartate 43 and aspartate 82 together coordinate Mg(2+). 3-methyl-2-oxobutanoate-binding positions include 43 to 44 (DS), aspartate 82, and lysine 112. Position 114 (glutamate 114) interacts with Mg(2+). Glutamate 179 functions as the Proton acceptor in the catalytic mechanism.

This sequence belongs to the PanB family. In terms of assembly, homodecamer; pentamer of dimers. The cofactor is Mg(2+).

It is found in the cytoplasm. The enzyme catalyses 3-methyl-2-oxobutanoate + (6R)-5,10-methylene-5,6,7,8-tetrahydrofolate + H2O = 2-dehydropantoate + (6S)-5,6,7,8-tetrahydrofolate. It participates in cofactor biosynthesis; (R)-pantothenate biosynthesis; (R)-pantoate from 3-methyl-2-oxobutanoate: step 1/2. In terms of biological role, catalyzes the reversible reaction in which hydroxymethyl group from 5,10-methylenetetrahydrofolate is transferred onto alpha-ketoisovalerate to form ketopantoate. The chain is 3-methyl-2-oxobutanoate hydroxymethyltransferase from Staphylococcus aureus (strain Newman).